The following is a 338-amino-acid chain: Probable tRNA pseudouridine synthase B (338 aa).

The Nucleophile role is filled by Asp-78. The PUA domain occupies 245–320 (LPKIILRDSA…IAASPIRVLM (76 aa)).

Belongs to the pseudouridine synthase TruB family. Type 2 subfamily.

It carries out the reaction uridine(55) in tRNA = pseudouridine(55) in tRNA. In terms of biological role, could be responsible for synthesis of pseudouridine from uracil-55 in the psi GC loop of transfer RNAs. The polypeptide is Probable tRNA pseudouridine synthase B (Methanosarcina mazei (strain ATCC BAA-159 / DSM 3647 / Goe1 / Go1 / JCM 11833 / OCM 88) (Methanosarcina frisia)).